A 158-amino-acid polypeptide reads, in one-letter code: MGVFTFEDESTSTIAPARLYKALVKDADAIIPKAVEAIQSIETVEGNGGPGTIKKLTLIEGGETKYVLHKIEAVDEANLGYNYSIVGGVGLPDTIEKISFETKLVEGANGGSIGKVTIKIETKGDAQPNEEEGKAAKARGDAFFKAIENYLSAHPEYN.

Asp8 provides a ligand contact to trans-zeatin. Ca(2+)-binding residues include Pro32, Val35, and Ile38. Residues Glu60, His69, Tyr81, and Tyr83 each coordinate trans-zeatin.

This sequence belongs to the BetVI family.

The protein resides in the cytoplasm. It is found in the cytosol. Class II ribonuclease (RNase). Binds to cytokinins. Interacts with melatonin. This Lupinus luteus (European yellow lupine) protein is Class 10 plant pathogenesis-related protein 2D.